Here is a 143-residue protein sequence, read N- to C-terminus: Large-conductance mechanosensitive channel (143 aa).

The next 2 helical transmembrane spans lie at 10–30 (FAVK…GAFS) and 89–109 (GSFI…FLMV).

Belongs to the MscL family. In terms of assembly, homopentamer.

Its subcellular location is the cell inner membrane. Channel that opens in response to stretch forces in the membrane lipid bilayer. May participate in the regulation of osmotic pressure changes within the cell. This is Large-conductance mechanosensitive channel from Burkholderia cenocepacia (strain HI2424).